Reading from the N-terminus, the 221-residue chain is Probable septum site-determining protein MinC (221 aa).

This sequence belongs to the MinC family. Interacts with MinD and FtsZ.

Cell division inhibitor that blocks the formation of polar Z ring septums. Rapidly oscillates between the poles of the cell to destabilize FtsZ filaments that have formed before they mature into polar Z rings. Prevents FtsZ polymerization. The polypeptide is Probable septum site-determining protein MinC (Shewanella sp. (strain MR-7)).